The following is a 182-amino-acid chain: CASP-like protein 2B1 (182 aa).

The Cytoplasmic portion of the chain corresponds to 1 to 12; that stretch reads MKLIDRRMRLTE. A helical transmembrane segment spans residues 13-31; that stretch reads LLLRCSISVFALLALILVV. Residues 32–52 lie on the Extracellular side of the membrane; that stretch reads TDTEVKLIFTIKKTAKYTDMK. The chain crosses the membrane as a helical span at residues 53–73; the sequence is AVVFLVVANGIAAVYSLLQSV. The Cytoplasmic segment spans residues 74-89; that stretch reads RCVVGTMKGKVLFSKP. A helical membrane pass occupies residues 90–110; that stretch reads LAWAFFSGDQAMAYLNVAAIA. At 111 to 141 the chain is on the extracellular side; sequence ATAESGVIAREGEEDLQWMRVCTMYGKFCNQ. The helical transmembrane segment at 142–162 threads the bilayer; the sequence is MAIGVSSALLASIAMVFVSCI. The Cytoplasmic segment spans residues 163 to 182; that stretch reads SAFSLFRLYGATKDRRTTPW.

Belongs to the Casparian strip membrane proteins (CASP) family. Homodimer and heterodimers.

The protein localises to the cell membrane. This chain is CASP-like protein 2B1, found in Arabidopsis thaliana (Mouse-ear cress).